The chain runs to 130 residues: MVWMRSAIVAVALGVTVAAVAAACWLPQLHRHVAHPNHPLTTSVGSEFVINTDHGHLVDNSMPPCPERLATAVLPRSATPVLLPDVVAAAPGMTAALTDPVAPAARGPPAAQGSVRTGQDLLTRFCLARR.

A signal peptide spans 1–23; it reads MVWMRSAIVAVALGVTVAAVAAA. C24 is lipidated: N-palmitoyl cysteine. The S-diacylglycerol cysteine moiety is linked to residue C24.

It localises to the cell membrane. In terms of biological role, may play an essential role in M.tuberculosis replication and survival inside the host cell. The protein is Lipoprotein LpqS of Mycobacterium tuberculosis (strain ATCC 25618 / H37Rv).